The sequence spans 673 residues: Annexin A6 (673 aa).

At Ala-2 the chain carries N-acetylalanine. Ser-13 bears the Phosphoserine mark. Annexin repeat units follow at residues 20-91, 92-163, 175-247, 251-322, 363-434, 435-506, 521-595, and 599-670; these read FNPS…GLMR, PPAY…VLLQ, DLVQ…AVVK, STAE…KLCG, FNPD…GLMM, PPAH…SLAT, EDAQ…AIVQ, and NKPL…AICG. Tyr-30 bears the Phosphotyrosine mark. N6-acetyllysine is present on residues Lys-63, Lys-68, Lys-75, and Lys-81. Tyr-201 is subject to Phosphotyrosine. 3 positions are modified to N6-acetyllysine: Lys-306, Lys-370, and Lys-418. Ser-422 is subject to Phosphoserine. Lys-483 is modified (N6-acetyllysine). Ser-537 carries the phosphoserine modification. Lys-620 carries the N6-acetyllysine modification.

This sequence belongs to the annexin family. Post-translationally, phosphorylated in response to growth factor stimulation.

The protein localises to the cytoplasm. It is found in the melanosome. May associate with CD21. May regulate the release of Ca(2+) from intracellular stores. This chain is Annexin A6 (ANXA6), found in Bos taurus (Bovine).